The following is a 343-amino-acid chain: MIKVGIVGGSGYGAIELIRLLQTHPHVTIAHIYSHSKVDEPLKLTFPHLQHIMQHFEALTVDNNDCDVIFFATPAPVSKTCIPPLVEKGIHVIDLSGAFRIKNREIYEAYYKETAAAQDDLNHAIYSISEWQSFDNNGTKLISNPGCFPTATLLALHPLISEKIVDLSSIIIDAKTGVSGAGRSLSQRVHFSEMNENLSAYAIGNHKHKPEIEQYLSIIAGQDVSVIFTPHLVPMTRGILSTIYVKLSSEYTTESLHKLMTSYYANQPFVRIRDIGTFPTTKEVLGSNYCDIGIYVDETTQTAILVSVIDNLVKGASGQAIQNLNILYDFEVTTGLNQSPVYP.

Residue Cys-147 is part of the active site.

Belongs to the NAGSA dehydrogenase family. Type 1 subfamily.

It localises to the cytoplasm. The enzyme catalyses N-acetyl-L-glutamate 5-semialdehyde + phosphate + NADP(+) = N-acetyl-L-glutamyl 5-phosphate + NADPH + H(+). The protein operates within amino-acid biosynthesis; L-arginine biosynthesis; N(2)-acetyl-L-ornithine from L-glutamate: step 3/4. In terms of biological role, catalyzes the NADPH-dependent reduction of N-acetyl-5-glutamyl phosphate to yield N-acetyl-L-glutamate 5-semialdehyde. The protein is N-acetyl-gamma-glutamyl-phosphate reductase of Staphylococcus aureus (strain USA300).